The following is a 425-amino-acid chain: Bifunctional phosphoribosylaminoimidazole carboxylase/phosphoribosylaminoimidazole succinocarboxamide synthetase (425 aa).

At Ala-2 the chain carries N-acetylalanine. The interval 2 to 260 is SAICAR synthetase domain; sequence ATAEVLNIGR…WVADRVELLL (259 aa). The residue at position 22 (Tyr-22) is a Phosphotyrosine. Position 27 is a phosphoserine (Ser-27). An N6-acetyllysine modification is found at Lys-36. At Ser-107 the chain carries Phosphoserine. A Phosphothreonine modification is found at Thr-238. Lys-247 bears the N6-acetyllysine mark. The tract at residues 261–266 is linker; it reads KSNSQC. The segment at 267 to 425 is AIR carboxylase domain; the sequence is RVVVLMGSTS…ADKKIRECNL (159 aa). Position 274 is a phosphoserine (Ser-274). Ser-332 contributes to the CO2 binding site.

This sequence in the N-terminal section; belongs to the SAICAR synthetase family. In the C-terminal section; belongs to the AIR carboxylase family. Class II subfamily. Homooctamer.

The enzyme catalyses 5-amino-1-(5-phospho-D-ribosyl)imidazole-4-carboxylate + L-aspartate + ATP = (2S)-2-[5-amino-1-(5-phospho-beta-D-ribosyl)imidazole-4-carboxamido]succinate + ADP + phosphate + 2 H(+). The catalysed reaction is 5-amino-1-(5-phospho-D-ribosyl)imidazole-4-carboxylate + H(+) = 5-amino-1-(5-phospho-beta-D-ribosyl)imidazole + CO2. The protein operates within purine metabolism; IMP biosynthesis via de novo pathway; 5-amino-1-(5-phospho-D-ribosyl)imidazole-4-carboxamide from 5-amino-1-(5-phospho-D-ribosyl)imidazole-4-carboxylate: step 1/2. It functions in the pathway purine metabolism; IMP biosynthesis via de novo pathway; 5-amino-1-(5-phospho-D-ribosyl)imidazole-4-carboxylate from 5-amino-1-(5-phospho-D-ribosyl)imidazole (carboxylase route): step 1/1. Functionally, bifunctional phosphoribosylaminoimidazole carboxylase and phosphoribosylaminoimidazole succinocarboxamide synthetase catalyzing two reactions of the de novo purine biosynthetic pathway. The chain is Bifunctional phosphoribosylaminoimidazole carboxylase/phosphoribosylaminoimidazole succinocarboxamide synthetase from Rattus norvegicus (Rat).